The sequence spans 106 residues: Iron-sulfur cluster assembly protein CyaY (106 aa).

This sequence belongs to the frataxin family.

Involved in iron-sulfur (Fe-S) cluster assembly. May act as a regulator of Fe-S biogenesis. The protein is Iron-sulfur cluster assembly protein CyaY of Salmonella agona (strain SL483).